The following is a 274-amino-acid chain: Cytochrome b-c1 complex subunit Rieske, mitochondrial (274 aa).

The Mitochondrial matrix segment spans residues 79–103 (SHTDIKVPDFSDYRRPEVLDSTKSS). A helical transmembrane segment spans residues 104-140 (KESSEARKGFSYLVTATTTVGVAYAAKNVVSQFVSSM). At 141–274 (SASADVLAMS…FTSDDMVIVG (134 aa)) the chain is on the mitochondrial intermembrane side. Residues 187-272 (EAAVEVSQLR…YEFTSDDMVI (86 aa)) form the Rieske domain. Residues C217, H219, C236, H239, and S241 each contribute to the [2Fe-2S] cluster site. The cysteines at positions 222 and 238 are disulfide-linked.

Belongs to the Rieske iron-sulfur protein family. As to quaternary structure, component of the ubiquinol-cytochrome c oxidoreductase (cytochrome b-c1 complex, complex III, CIII), a multisubunit enzyme composed of 11 subunits. The complex is composed of 3 respiratory subunits cytochrome b, cytochrome c1 and Rieske protein UQCRFS1, 2 core protein subunits UQCRC1/QCR1 and UQCRC2/QCR2, and 6 low-molecular weight protein subunits UQCRH/QCR6, UQCRB/QCR7, UQCRQ/QCR8, UQCR10/QCR9, UQCR11/QCR10 and subunit 9, the cleavage product of Rieske protein UQCRFS1. The complex exists as an obligatory dimer and forms supercomplexes (SCs) in the inner mitochondrial membrane with NADH-ubiquinone oxidoreductase (complex I, CI) and cytochrome c oxidase (complex IV, CIV), resulting in different assemblies (supercomplex SCI(1)III(2)IV(1) and megacomplex MCI(2)III(2)IV(2)). Incorporation of the Rieske protein UQCRFS1 is the penultimate step in complex III assembly. Interacts with TTC19, which is involved in the clearance of UQCRFS1 fragments. In terms of assembly, component of the ubiquinol-cytochrome c oxidoreductase (cytochrome b-c1 complex, complex III, CIII). Subunit 9 corresponds to the mitochondrial targeting sequence (MTS) of Rieske protein UQCRFS1. It is retained after processing and incorporated inside complex III, where it remains bound to the complex and localizes between the 2 core subunits UQCRC1/QCR1 and UQCRC2/QCR2. [2Fe-2S] cluster is required as a cofactor. Post-translationally, proteolytic processing is necessary for the correct insertion of UQCRFS1 in the complex III dimer. Several fragments are generated during UQCRFS1 insertion, most probably due to the endogenous matrix-processing peptidase (MPP) activity of the 2 core protein subunits UQCRC1/QCR1 and UQCRC2/QCR2, which are homologous to the 2 mitochondrial-processing peptidase (MPP) subunits beta-MPP and alpha-MPP respectively. The action of the protease is also necessary for the clearance of the UQCRFS1 fragments.

The protein resides in the mitochondrion inner membrane. It carries out the reaction a quinol + 2 Fe(III)-[cytochrome c](out) = a quinone + 2 Fe(II)-[cytochrome c](out) + 2 H(+)(out). Component of the ubiquinol-cytochrome c oxidoreductase, a multisubunit transmembrane complex that is part of the mitochondrial electron transport chain which drives oxidative phosphorylation. The respiratory chain contains 3 multisubunit complexes succinate dehydrogenase (complex II, CII), ubiquinol-cytochrome c oxidoreductase (cytochrome b-c1 complex, complex III, CIII) and cytochrome c oxidase (complex IV, CIV), that cooperate to transfer electrons derived from NADH and succinate to molecular oxygen, creating an electrochemical gradient over the inner membrane that drives transmembrane transport and the ATP synthase. The cytochrome b-c1 complex catalyzes electron transfer from ubiquinol to cytochrome c, linking this redox reaction to translocation of protons across the mitochondrial inner membrane, with protons being carried across the membrane as hydrogens on the quinol. In the process called Q cycle, 2 protons are consumed from the matrix, 4 protons are released into the intermembrane space and 2 electrons are passed to cytochrome c. The Rieske protein is a catalytic core subunit containing a [2Fe-2S] iron-sulfur cluster. It cycles between 2 conformational states during catalysis to transfer electrons from the quinol bound in the Q(0) site in cytochrome b to cytochrome c1. Incorporation of UQCRFS1 is the penultimate step in complex III assembly. Its function is as follows. Component of the ubiquinol-cytochrome c oxidoreductase (cytochrome b-c1 complex, complex III, CIII). UQCRFS1 undergoes proteolytic processing once it is incorporated in the complex III dimer. One of the fragments, called subunit 9, corresponds to its mitochondrial targeting sequence (MTS). The proteolytic processing is necessary for the correct insertion of UQCRFS1 in the complex III dimer, but the persistence of UQCRFS1-derived fragments may prevent newly imported UQCRFS1 to be processed and assembled into complex III and is detrimental for the complex III structure and function. This chain is Cytochrome b-c1 complex subunit Rieske, mitochondrial (UQCRFS1), found in Bos taurus (Bovine).